The primary structure comprises 98 residues: Bombyxin A-3 homolog (98 aa).

Positions 1–18 (MRTQVLFLVLEVAAMASG) are cleaved as a signal peptide. Intrachain disulfides connect Cys-26–Cys-85, Cys-38–Cys-98, and Cys-84–Cys-89. The propeptide at 47–75 (TPYTSSESEGYGWRWLAPQRARQLAGARG) is c peptide like.

This sequence belongs to the insulin family. In terms of assembly, heterodimer of a B chain and an A chain linked by two disulfide bonds.

It localises to the secreted. In terms of biological role, brain peptide responsible for activation of prothoracic glands to produce ecdysone in insects. This chain is Bombyxin A-3 homolog (SBXA3), found in Samia cynthia (Ailanthus silkmoth).